A 356-amino-acid polypeptide reads, in one-letter code: Dual-specificity RNA methyltransferase RlmN (356 aa).

Glu-92 serves as the catalytic Proton acceptor. A Radical SAM core domain is found at 98–334 (EKDRGTLCIS…MRRTRGEDID (237 aa)). Cysteines 105 and 337 form a disulfide. Positions 112, 116, and 119 each coordinate [4Fe-4S] cluster. S-adenosyl-L-methionine-binding positions include 162–163 (GE), Ser-194, 216–218 (SLH), and Asn-294. Cys-337 functions as the S-methylcysteine intermediate in the catalytic mechanism.

Belongs to the radical SAM superfamily. RlmN family. [4Fe-4S] cluster serves as cofactor.

It is found in the cytoplasm. It carries out the reaction adenosine(2503) in 23S rRNA + 2 reduced [2Fe-2S]-[ferredoxin] + 2 S-adenosyl-L-methionine = 2-methyladenosine(2503) in 23S rRNA + 5'-deoxyadenosine + L-methionine + 2 oxidized [2Fe-2S]-[ferredoxin] + S-adenosyl-L-homocysteine. It catalyses the reaction adenosine(37) in tRNA + 2 reduced [2Fe-2S]-[ferredoxin] + 2 S-adenosyl-L-methionine = 2-methyladenosine(37) in tRNA + 5'-deoxyadenosine + L-methionine + 2 oxidized [2Fe-2S]-[ferredoxin] + S-adenosyl-L-homocysteine. Specifically methylates position 2 of adenine 2503 in 23S rRNA and position 2 of adenine 37 in tRNAs. m2A2503 modification seems to play a crucial role in the proofreading step occurring at the peptidyl transferase center and thus would serve to optimize ribosomal fidelity. This Vesicomyosocius okutanii subsp. Calyptogena okutanii (strain HA) protein is Dual-specificity RNA methyltransferase RlmN.